Consider the following 543-residue polypeptide: MRHSLPYRMLRKRPMKLSTTVILMVSAVLFSVLLVVHLIYFSQISDMTRDGLANKALAVARTLADSPEIRQGLQKKPQESGIQAIAEAVRKRNDLLFIVVTDMQSLRYSHPEAQRIGQPFKGDDILKALNGEENVAINRGFLAQALRVFTPIYDENHKQIGVVAIGLELSRVTQQINDSRWSIIWSVLFGMLVGLIGTCILVKVLKKILFGLEPYEISTLFEQRQAMLQSIKEGVVAVDDRGEVTLINDAAQELLNYRKSQDDEKLSTLSHSWSQVVDVSEVLRDGTPRRDEEITIKDRLLLINTVPVRSNGVIIGAISTFRDKTEVRKLMQRLDGLVNYADALRERSHEFMNKLHVILGLLHLKSYKQLEDYILKTANNYQEEIGSLLGKIKSPVIAGFLISKINRATDLGHTLILNSESQLPDSGSEDQVATLITTLGNLIENALEALGPEPGGEISVTLHYRHGWLHCEVNDDGPGIAPDKIDHIFDKGVSTKGSERGVGLALVKQQVENLGGSIAVESEPGIFTQFFVQIPWDGERSNR.

Residues 1-20 (MRHSLPYRMLRKRPMKLSTT) are Cytoplasmic-facing. The chain crosses the membrane as a helical span at residues 21–41 (VILMVSAVLFSVLLVVHLIYF). Over 42 to 181 (SQISDMTRDG…VTQQINDSRW (140 aa)) the chain is Periplasmic. Residues 107–110 (RYSH), lysine 121, 140–142 (GFL), and arginine 147 contribute to the (R)-malate site. Residues 182-202 (SIIWSVLFGMLVGLIGTCILV) traverse the membrane as a helical segment. At 203-543 (KVLKKILFGL…IPWDGERSNR (341 aa)) the chain is on the cytoplasmic side. Positions 212 to 323 (LEPYEISTLF…IIGAISTFRD (112 aa)) constitute a PAS domain. Residues 346–538 (ERSHEFMNKL…QFFVQIPWDG (193 aa)) enclose the Histidine kinase domain. Histidine 349 carries the post-translational modification Phosphohistidine; by autocatalysis.

In terms of assembly, homodimer. Post-translationally, autophosphorylated. The phosphoryl group is rapidly transferred to DcuR.

Its subcellular location is the cell inner membrane. The enzyme catalyses ATP + protein L-histidine = ADP + protein N-phospho-L-histidine.. In terms of biological role, member of the two-component regulatory system DcuR/DcuS. Involved in the C4-dicarboxylate-stimulated regulation of the genes encoding the anaerobic fumarate respiratory system (frdABCD; nuoAN; dcuB; sdhCDAB; etc.). Weakly regulates the aerobic C4-dicarboxylate transporter dctA. Activates DcuR by phosphorylation. The sequence is that of Sensor histidine kinase DcuS (dcuS) from Escherichia coli O157:H7.